A 231-amino-acid chain; its full sequence is Large ribosomal subunit protein uL1 (231 aa).

This sequence belongs to the universal ribosomal protein uL1 family. In terms of assembly, part of the 50S ribosomal subunit.

In terms of biological role, binds directly to 23S rRNA. The L1 stalk is quite mobile in the ribosome, and is involved in E site tRNA release. Functionally, protein L1 is also a translational repressor protein, it controls the translation of the L11 operon by binding to its mRNA. The protein is Large ribosomal subunit protein uL1 of Acetivibrio thermocellus (strain ATCC 27405 / DSM 1237 / JCM 9322 / NBRC 103400 / NCIMB 10682 / NRRL B-4536 / VPI 7372) (Clostridium thermocellum).